The primary structure comprises 137 residues: MRMGGSFVVLSGVIAIVVGSVLGGCARYFISGAVARRLGETFPWGTMTINVTGAFLIGIFGALATHPGSMFASPNPWLFAVTGFLGCYTTVSSFSLQTLTLARNGEPMHALGNVAFSVGLCLAAVSCGFLLADGLGG.

A run of 4 helical transmembrane segments spans residues M3–G23, W44–A64, P76–L96, and L111–L131. 2 residues coordinate Na(+): G86 and T89.

This sequence belongs to the fluoride channel Fluc/FEX (TC 1.A.43) family.

The protein localises to the cell inner membrane. The enzyme catalyses fluoride(in) = fluoride(out). Na(+) is not transported, but it plays an essential structural role and its presence is essential for fluoride channel function. Fluoride-specific ion channel. Important for reducing fluoride concentration in the cell, thus reducing its toxicity. This chain is Fluoride-specific ion channel FluC 2, found in Bradyrhizobium diazoefficiens (strain JCM 10833 / BCRC 13528 / IAM 13628 / NBRC 14792 / USDA 110).